Reading from the N-terminus, the 315-residue chain is Ankyrin repeat domain-containing protein 54 (315 aa).

Positions 1 to 49 (MDGSSPLLAAAGSDGDRSSSEGEYTLAGGPSAGDTEKREGESPMEAAGA) are disordered. ANK repeat units lie at residues 124–153 (HAVK…DPCA), 157–186 (KGRT…DPNQ), 190–219 (LGNT…RVDA), and 223–255 (AGRT…EVTQ).

Its subcellular location is the nucleus. The protein localises to the cytoplasm. It is found in the midbody. Its function is as follows. Plays an important role in regulating intracellular signaling events associated with erythroid terminal differentiation. This chain is Ankyrin repeat domain-containing protein 54 (ankrd54), found in Danio rerio (Zebrafish).